A 29-amino-acid chain; its full sequence is Prolamin alpha-1 (29 aa).

The sequence is that of Prolamin alpha-1 from Dactylis glomerata (Orchard grass).